The following is a 623-amino-acid chain: Leucine-rich repeat, immunoglobulin-like domain and transmembrane domain-containing protein 1 (623 aa).

Positions 1–21 (MWVALGMLWLLALGGPHQAWS) are cleaved as a signal peptide. The 38-residue stretch at 22–59 (FCPSQCSCSLHILSDGSKARTVVCSDPDLTLPPASIPP) folds into the LRRNT domain. The Lumenal portion of the chain corresponds to 22 to 526 (FCPSQCSCSL…EVVDAEGTQR (505 aa)). 5 LRR repeats span residues 60–81 (DTCKLRLERTAIRRVPGETFRP), 84–105 (RLEQLWLPYNALSELSTLMLRG), 108–128 (RLRELRLPGNHLVTFPWAALK), 132–153 (QLQLLDLQANRLSTLPPEAVHF), and 156–177 (NLTFLDLSNNQLMRLPEELLDT). A glycan (N-linked (GlcNAc...) asparagine) is linked at N156. The 53-residue stretch at 201–253 (NPWVCDCRLYDLVHLLDGWASNLIFIEARLRCGSPRSLAGVAFSQLELRKCQS) folds into the LRRCT domain. The Ig-like C2-type domain maps to 266–332 (PLGSTVLLRC…SGDYICQAKN (67 aa)). C275 and C328 are oxidised to a cystine. N-linked (GlcNAc...) asparagine glycosylation is found at N296 and N455. Positions 430–518 (MVRSLKVVGD…QCVIFSTDEV (89 aa)) constitute a Fibronectin type-III domain. Residues 525-548 (QRLINMVVISVAAIIALPPTLLVC) form an LRR 6 repeat. Residues 527-547 (LINMVVISVAAIIALPPTLLV) traverse the membrane as a helical segment. The Cytoplasmic segment spans residues 548–623 (CCGALRRRCH…GGRRINEYFC (76 aa)).

As to quaternary structure, homodimer. Interacts with LRIT2; may form a heterodimer with LRIT2. Interacts (via its N-terminal extracellular domain) with metabotropic glutamate receptor GRM6. Interacts (via its extreme C-terminus) with the scaffold protein FRMPD2 (via the third PDZ domain); the interaction leads to their colocalization in photoreceptor synapses. As to expression, retina, outer segments of photoreceptor cells.

It is found in the endoplasmic reticulum membrane. Its subcellular location is the cell projection. The protein localises to the dendrite. Functionally, photoreceptor synaptic protein essential for normal vision. Involved in synapse formation in cone photoreceptor cells. This chain is Leucine-rich repeat, immunoglobulin-like domain and transmembrane domain-containing protein 1 (Lrit1), found in Rattus norvegicus (Rat).